Reading from the N-terminus, the 544-residue chain is Thermosome subunit (544 aa).

The protein belongs to the TCP-1 chaperonin family. In terms of assembly, forms an oligomeric complex of eight-membered rings.

In terms of biological role, molecular chaperone; binds unfolded polypeptides in vitro, and has a weak ATPase activity. This Methanothermococcus thermolithotrophicus (Methanococcus thermolithotrophicus) protein is Thermosome subunit (ths).